Reading from the N-terminus, the 70-residue chain is KKNGYAVDSSGKAPECLLSNYCYNECTKVHYADKGYCCLLSCYCVGLSDDKKVLEISDARKKYCDFVTIN.

The region spanning 2–65 (KNGYAVDSSG…ISDARKKYCD (64 aa)) is the LCN-type CS-alpha/beta domain. Disulfide bonds link Cys16/Cys37, Cys22/Cys42, Cys26/Cys44, and Cys38/Cys64.

The protein belongs to the long (4 C-C) scorpion toxin superfamily. Sodium channel inhibitor family. Beta subfamily. Expressed by the venom gland.

Its subcellular location is the secreted. In terms of biological role, excitatory insect beta-toxins induce a spastic paralysis. They bind voltage-independently at site-4 of sodium channels (Nav) and shift the voltage of activation toward more negative potentials thereby affecting sodium channel activation and promoting spontaneous and repetitive firing. In vivo, this toxin induces a fast excitatory contraction paralysis on fly larvae. It is active only on insects. The sequence is that of Beta-insect excitatory toxin LqqIT1 from Leiurus quinquestriatus quinquestriatus (Egyptian scorpion).